We begin with the raw amino-acid sequence, 450 residues long: tRNA-2-methylthio-N(6)-dimethylallyladenosine synthase (450 aa).

In terms of domain architecture, MTTase N-terminal spans 8–128 (KRLYIKTYGC…LPELIARAHR (121 aa)). Positions 17, 53, 91, 166, 170, and 173 each coordinate [4Fe-4S] cluster. A Radical SAM core domain is found at 152-382 (RPTGVTAFLT…QALLEQQQLA (231 aa)). Positions 385 to 447 (AAQAGRVLPV…RNSLAGVLEL (63 aa)) constitute a TRAM domain.

This sequence belongs to the methylthiotransferase family. MiaB subfamily. Monomer. [4Fe-4S] cluster serves as cofactor.

It localises to the cytoplasm. The catalysed reaction is N(6)-dimethylallyladenosine(37) in tRNA + (sulfur carrier)-SH + AH2 + 2 S-adenosyl-L-methionine = 2-methylsulfanyl-N(6)-dimethylallyladenosine(37) in tRNA + (sulfur carrier)-H + 5'-deoxyadenosine + L-methionine + A + S-adenosyl-L-homocysteine + 2 H(+). In terms of biological role, catalyzes the methylthiolation of N6-(dimethylallyl)adenosine (i(6)A), leading to the formation of 2-methylthio-N6-(dimethylallyl)adenosine (ms(2)i(6)A) at position 37 in tRNAs that read codons beginning with uridine. The protein is tRNA-2-methylthio-N(6)-dimethylallyladenosine synthase of Phenylobacterium zucineum (strain HLK1).